Reading from the N-terminus, the 799-residue chain is MLYSTSDKSLVHCSVPQQIFYRAEECMGDEIVGSLLCKENILLCTPRKYIFPHLVLRALNMDETMGFQKRENPSKRAEILVVTNRLEMLAFLETCRVNAERLFQICSNIHQYIGYCNMGDTYFARVYWRHILYHYYEGKLPQDVPLHYIYPVASGYRKFNALSRGNRNILGRKDSQNPTIYVTENLDMLNEQEHSFDYIFVDCSYIKKGLSNLPKSTLLFFDNLLDDRIPYLQKSAVKNYIVDGDCIQNIDENEIQQPMINIEELLHKVSIHSLDVEYVKSSFEQEIERLIHLLDKLRKGKFSRYDTNVAAKLVYILIRLPIGAGLYDLIASMQPYWDTVLGLLQELKDSESRYENDSFEEMVSLFEDILYKHSLDRSNPKGDELKAFILNEVKQGKSVCVVSNSRKNQLALKEFISLAMGMTIEELAEYDLQFFVSKDIWAQDITVHCDSLVMYSAINFRDLQSLLKISYKRAKLYLYSSEINLITQKLKTILEAENYALRHFVQNSTQQDSTNFYRYLYNRFNKFARQKVIGLNSAAADLLEKSTTVSPAVYRGEKDYKGTDAVKATLVHFTDGSVSFFTKNSAVYVLDNKNKRVTHKHFHEIGLKDTILFVDNDARKDLYRIFIQSVDAKDTSKQAYLSIKKWRELYEEKFMEKRMDDDRLFRLMRTAGWNKTTKSVLRNWRTGYSYGPRDREDIMVLGEVLGINTFVEDVQTYYNAMSKIRVERRKASRILNKLIYSSKQVLGNEDSAILARYNLTLEQLNESLVTKSIKEIVSDRMYYIKPAEVGLLYNVDAKE.

It is found in the cytoplasm. In terms of biological role, component of antiviral defense system DISARM (defense island system associated with restriction-modification), composed of DrmE, DrmA, DrmB, DrmC and DrmMII. DISARM is probably a multi-gene restriction module, this subunit has an unknown function. Expression of DISARM in B.subtilis (strain BEST7003) confers resistance to phages Nf, phi29, phi105, phi3T, SPO1, SPR and SPP1. Protection is over 10(7)-fold against phi3T, 10(4)-10(5)-fold against Nf, phi29, phi105 and SPR, 100-fold against SPO1 and 10-fold against SPP1. DISARM does not interfere with phage adsorption, but instead interferes with (phi3T) DNA replication early in its cycle, preventing replication, circularization and lysogeny and probably causes phage DNA degradation (DNA is degraded in SPP1-infected cells). The polypeptide is DISARM protein DrmE (Bacillus paralicheniformis (strain ATCC 9945a / NCIMB 11709 / CD-2)).